Consider the following 79-residue polypeptide: Exodeoxyribonuclease 7 small subunit (79 aa).

The protein belongs to the XseB family. Heterooligomer composed of large and small subunits.

It localises to the cytoplasm. The catalysed reaction is Exonucleolytic cleavage in either 5'- to 3'- or 3'- to 5'-direction to yield nucleoside 5'-phosphates.. Its function is as follows. Bidirectionally degrades single-stranded DNA into large acid-insoluble oligonucleotides, which are then degraded further into small acid-soluble oligonucleotides. This is Exodeoxyribonuclease 7 small subunit from Haemophilus influenzae (strain PittGG).